Here is a 413-residue protein sequence, read N- to C-terminus: Precorrin-6Y C(5,15)-methyltransferase [decarboxylating] (413 aa).

Belongs to the precorrin methyltransferase family.

It carries out the reaction precorrin-6B + 2 S-adenosyl-L-methionine = precorrin-8X + 2 S-adenosyl-L-homocysteine + CO2 + 3 H(+). It functions in the pathway cofactor biosynthesis; adenosylcobalamin biosynthesis; cob(II)yrinate a,c-diamide from precorrin-2 (aerobic route): step 7/10. Functionally, catalyzes the methylation of both C-5 and C-15 in precorrin-6Y to form precorrin-8X. This Sinorhizobium sp protein is Precorrin-6Y C(5,15)-methyltransferase [decarboxylating] (cobL).